The sequence spans 452 residues: Putative purine permease CPE0397 (452 aa).

12 consecutive transmembrane segments (helical) span residues 34-54 (IFAAFGGIIVVPLVIATSLGF), 58-78 (VTTALISASILGSGLATIIQA), 83-103 (KVGARVACIMGTDFTFVSPAI), 108-128 (VLGLPGIIGATILGSLFEVIL), 138-158 (FFPPLVTGTVVALIGLTLLPV), 172-192 (YASLENLAVAMFVLVITLLLN), 201-221 (SASILIGIVVGYIVCIPLGLV), 250-270 (MAFIPAYFVATIGTVGCLKAI), 326-346 (AVMAGILLVILGFLPKVAAII), 348-368 (GIPNPVLGGVGIMMFGTVAAA), 383-403 (LLIIAISMGLGLGVTFRPDVI), and 412-432 (MIFSSGISTGTIAALILNAVL).

This sequence belongs to the nucleobase:cation symporter-2 (NCS2) (TC 2.A.40) family.

It localises to the cell membrane. The polypeptide is Putative purine permease CPE0397 (cpx) (Clostridium perfringens (strain 13 / Type A)).